We begin with the raw amino-acid sequence, 382 residues long: Putative oxidoreductase C1F5.03c (382 aa).

The helical transmembrane segment at 7–27 threads the bilayer; it reads IVIVGGGITGVSCLYFLAHHP.

This sequence belongs to the TDA3 family.

The protein resides in the cytoplasm. It is found in the membrane. Functionally, putative oxidoreductase that negatively regulates the retrieval of cargo from late endosomes to the Golgi. This chain is Putative oxidoreductase C1F5.03c, found in Schizosaccharomyces pombe (strain 972 / ATCC 24843) (Fission yeast).